A 420-amino-acid chain; its full sequence is MKTLIARHKAGEHIGICSVCSAHPLVIEAALAFDRNSTRKVLIEATSNQVNQFGGYTCMTPADFREFVFAIADRVGFARERIILGGDHLGPNCWQQENADAAMEKSVELVKAYVRAGFSKIHLDASMSCAGDPIPLAPETVAERAAVLCFAAESVATDCQREQLSYVIGTEVPVPGGEASAIQSVHITHVEDAANTLRTHQKAFIARGLAEALTRVIAIVVQPGVEFDHSNIIHYQPQEAQPLAQWIENTRMVYEAHSTDYQTRTAYWELVRDHFAILKVGPALTFALREAIFALAQIEQELIAPENRSGCLAVIEEVMLDEPQYWKKYYRPGFNDSLLDIRYSLSDRIRYYWPHSRIKNSVETMMVNLEGMEIPLGMISQYLPKQFERIQSGELSAIPHQLIMDKIYDVLRAYRYGCAE.

Belongs to the GatZ/KbaZ family. GatZ subfamily. Forms a complex with GatY.

The protein operates within carbohydrate metabolism; D-tagatose 6-phosphate degradation; D-glyceraldehyde 3-phosphate and glycerone phosphate from D-tagatose 6-phosphate: step 2/2. Its function is as follows. Component of the tagatose-1,6-bisphosphate aldolase GatYZ that is required for full activity and stability of the Y subunit. Could have a chaperone-like function for the proper and stable folding of GatY. When expressed alone, GatZ does not show any aldolase activity. Is involved in the catabolism of galactitol. The sequence is that of D-tagatose-1,6-bisphosphate aldolase subunit GatZ from Escherichia coli O17:K52:H18 (strain UMN026 / ExPEC).